Reading from the N-terminus, the 212-residue chain is MNGALGKVLCLKNDTIFKQAFSLLRFRTSGENPVYSAGGILLTTSRHYRSKPTHGIGRYKHLVKPEEPKKKKGKVEIRAINVGTDYEYGTLNIHLIAYDMALTESYAQYVHNLCNHLSIKVEESYAMPTKTMEVLQLQDQGNKMLLDSVLTTHERVVQISGLNATFAEIFLEIIQSNLPEGVKLSVREHTEEDFKGRFKARPELEELLAKLN.

The transit peptide at 1-28 (MNGALGKVLCLKNDTIFKQAFSLLRFRT) directs the protein to the mitochondrion. An N6-succinyllysine modification is found at lysine 199.

This sequence belongs to the mitochondrion-specific ribosomal protein mL48 family. In terms of assembly, component of the mitochondrial ribosome large subunit (39S) which comprises a 16S rRNA and about 50 distinct proteins. Interacts with OXA1L.

The protein resides in the mitochondrion. In Bos taurus (Bovine), this protein is Large ribosomal subunit protein mL48 (MRPL48).